Consider the following 1046-residue polypeptide: MLKDAHQKLIKHRQSTKLSMTDFACQAAPVKQPLPLELPLPLSVQLQLLAKTPTSDHAPMHSTPPTTPPTPPPLPLNMSQSASAVTEAATPENSLPATPPSEGALAVPSAPQDHYSLRWNNHQNHILRAFDALLKTKTLVDVTLVCAETSIRAHKMVLSACSPFFQRVFAETPCKHPVIVLKDFRGWVVQAIVDFMYRGEISVPQQRLQTLIQAGESLQVRGLVESSVPEHTPTPAASPDDFGMLDTSMLSSTFEDECPTMVRPSKGGKLLMPSARLFGNASSAIAALGLRRKREQESDRDLESDQELGGSSPMPRRKQARPRRRSGDVPHDFTLNKTDAESLQTVIKHELLERAERDQEEAPDQDNSQGEAEKISSSPAKTLVERAKEQKSMKEEGSDQPRSLNENHHQLELDDEDDDDQDHEEEEEQDIEELIHTTNELRRQAAAAAANAAAMSPNPSPCLSDGPEDLCTTKKGKELISGPSSSADCESNNNNSSKLQDNNQRIMLSLKDIRQLNANPNPTAIHTPTSCSGGNNGLLTFPPPGLRPPGLPDSPPCHMEALEAQMHAAAAAAVAAAGSGEHPFHHMEHQMEMSLAAAAAAAAMHQREPRDPRDGRDHNAFASNLLGPMGMPPFGGHNGGHPGNSGPGNGCPGQAAHERLEESMNRLSKELGKEFGKEFGKEFGKEFGPASPMSLQGPFNAPDGPPHPPSPLPFPGMSSAMTLTPPHMFGLDSPLGLFPPGIDPGKLYNPLMEMSDPRDMPGGPPPFLKKKMPRPKGQHSAPRGGPPRSWTNTELTEALQHVWNKKMTTSQASRIFGIPYNSLLMYVRGKYGKSLKLEQLRKDCISGPPIEMLQMGIGGGSGGSTKNEKSKERKEKEKDKNSMSSNGSGGSANSQGGAPTSGSGPMQHSGELGPMGQLDLDLGLPLGPPGGPRSNSSEPDLLSAPNALFNPFNPQGFYPDFSGGFPGLPLSMLNLLPPAERHHAAAAMHHLGVSMDEDCKSVGSKQSSSVDEDYSGPGIPLSLEHRREISATGPPLTPSNGGTGHD.

The tract at residues Thr-54–Ser-109 is disordered. Positions Pro-65–Pro-75 are enriched in pro residues. The BTB domain maps to Val-140–Gln-205. Disordered stretches follow at residues Leu-290–Ser-342, Ala-355–Asp-501, Pro-632–Ala-655, Glu-686–Ser-719, Arg-758–Thr-791, Glu-851–Ala-947, and Asp-998–Asp-1046. The segment covering Arg-294 to Glu-303 has biased composition (basic and acidic residues). A compositionally biased stretch (basic residues) spans Pro-315–Arg-324. Residues Gln-365 to Ala-380 show a composition bias toward polar residues. Positions Leu-383–Glu-412 are enriched in basic and acidic residues. Positions Leu-413 to Glu-432 are enriched in acidic residues. Over residues Glu-433 to Arg-443 the composition is skewed to basic and acidic residues. The segment covering Ala-445–Ala-454 has biased composition (low complexity). Gly residues predominate over residues Gly-636–Cys-651. Residues Asp-703–Phe-714 are compositionally biased toward pro residues. Residues Leu-768–Gly-777 show a composition bias toward basic residues. An HTH psq-type domain is found at Ala-781–Lys-833. Over residues Lys-866 to Asn-881 the composition is skewed to basic and acidic residues. 2 stretches are compositionally biased toward low complexity: residues Ser-882–Gly-897 and Leu-912–Pro-925.

As to expression, initially expressed at blastoderm stage, transient accumulation at dorso-lateral positions of the embryo and differences along the longitudinal axis. At later stages of embryogenesis, expression is found exclusively in neural anlagen. Expressed in 4 posterior-most ventral unpaired median interneurons (VUM) neurons, VUM interneurons and one progeny of the median neuroblast (MNB).

Its subcellular location is the nucleus. In terms of biological role, has a regulatory role during midline cell development. The sequence is that of Protein jim lovell (lov) from Drosophila melanogaster (Fruit fly).